The sequence spans 57 residues: UPF0391 membrane protein Xaut_1725 (57 aa).

A run of 2 helical transmembrane segments spans residues 4–24 (WAVT…GGIA) and 30–50 (IAKI…VAGL).

It belongs to the UPF0391 family.

Its subcellular location is the cell membrane. The protein is UPF0391 membrane protein Xaut_1725 of Xanthobacter autotrophicus (strain ATCC BAA-1158 / Py2).